We begin with the raw amino-acid sequence, 317 residues long: Acetyl-coenzyme A carboxylase carboxyl transferase subunit alpha (317 aa).

Residues 40 to 293 (LEVRVREAIV…GDVIANALGE (254 aa)) form the CoA carboxyltransferase C-terminal domain.

Belongs to the AccA family. Acetyl-CoA carboxylase is a heterohexamer composed of biotin carboxyl carrier protein (AccB), biotin carboxylase (AccC) and two subunits each of ACCase subunit alpha (AccA) and ACCase subunit beta (AccD).

It is found in the cytoplasm. The catalysed reaction is N(6)-carboxybiotinyl-L-lysyl-[protein] + acetyl-CoA = N(6)-biotinyl-L-lysyl-[protein] + malonyl-CoA. The protein operates within lipid metabolism; malonyl-CoA biosynthesis; malonyl-CoA from acetyl-CoA: step 1/1. Component of the acetyl coenzyme A carboxylase (ACC) complex. First, biotin carboxylase catalyzes the carboxylation of biotin on its carrier protein (BCCP) and then the CO(2) group is transferred by the carboxyltransferase to acetyl-CoA to form malonyl-CoA. The sequence is that of Acetyl-coenzyme A carboxylase carboxyl transferase subunit alpha from Rhizobium etli (strain ATCC 51251 / DSM 11541 / JCM 21823 / NBRC 15573 / CFN 42).